The following is a 437-amino-acid chain: Probable inactive DNA (cytosine-5)-methyltransferase DRM1B (437 aa).

2 consecutive UBA domains span residues 20–60 and 120–164; these read SAPS…LLQL and EMSE…IYAP. The region spanning 243-437 is the SAM-dependent MTase DRM-type domain; that stretch reads VHRNLPDHAL…LIQLHTTSLC (195 aa).

It belongs to the class I-like SAM-binding methyltransferase superfamily. DRM-methyltransferase family.

It is found in the nucleus. Functionally, involved in de novo DNA methylation. Involved in RNA-directed DNA methylation (RdDM). The chain is Probable inactive DNA (cytosine-5)-methyltransferase DRM1B from Oryza sativa subsp. japonica (Rice).